We begin with the raw amino-acid sequence, 692 residues long: Glycine--tRNA ligase beta subunit (692 aa).

It belongs to the class-II aminoacyl-tRNA synthetase family. In terms of assembly, tetramer of two alpha and two beta subunits.

It localises to the cytoplasm. The enzyme catalyses tRNA(Gly) + glycine + ATP = glycyl-tRNA(Gly) + AMP + diphosphate. This Hahella chejuensis (strain KCTC 2396) protein is Glycine--tRNA ligase beta subunit.